We begin with the raw amino-acid sequence, 228 residues long: Superoxide dismutase [Mn] (228 aa).

The first 23 residues, 1 to 23 (MTRSLKTTLILLASSVISMSALA), serve as a signal peptide directing secretion. Histidine 49, histidine 100, aspartate 188, and histidine 192 together coordinate Mn(2+).

This sequence belongs to the iron/manganese superoxide dismutase family. Requires Mn(2+) as cofactor.

It is found in the periplasm. The enzyme catalyses 2 superoxide + 2 H(+) = H2O2 + O2. Functionally, destroys superoxide anion radicals which are normally produced within the cells and which are toxic to biological systems. This chain is Superoxide dismutase [Mn] (sodA), found in Acinetobacter baylyi (strain ATCC 33305 / BD413 / ADP1).